We begin with the raw amino-acid sequence, 143 residues long: Putative pre-16S rRNA nuclease (143 aa).

The protein belongs to the YqgF nuclease family.

It is found in the cytoplasm. Could be a nuclease involved in processing of the 5'-end of pre-16S rRNA. In Mesomycoplasma hyopneumoniae (strain 232) (Mycoplasma hyopneumoniae), this protein is Putative pre-16S rRNA nuclease.